The following is a 226-amino-acid chain: 2,3-bisphosphoglycerate-dependent phosphoglycerate mutase (226 aa).

Substrate-binding positions include 8-15 (RHGQSVWN), 21-22 (TG), R58, 109-112 (ERMY), K120, 136-137 (RR), and 180-181 (GN). Residue H9 is the Tele-phosphohistidine intermediate of the active site. E109 serves as the catalytic Proton donor/acceptor.

The protein belongs to the phosphoglycerate mutase family. BPG-dependent PGAM subfamily.

It catalyses the reaction (2R)-2-phosphoglycerate = (2R)-3-phosphoglycerate. It functions in the pathway carbohydrate degradation; glycolysis; pyruvate from D-glyceraldehyde 3-phosphate: step 3/5. Functionally, catalyzes the interconversion of 2-phosphoglycerate and 3-phosphoglycerate. The polypeptide is 2,3-bisphosphoglycerate-dependent phosphoglycerate mutase (Chlamydia trachomatis serovar A (strain ATCC VR-571B / DSM 19440 / HAR-13)).